We begin with the raw amino-acid sequence, 237 residues long: BTB/POZ domain-containing protein KCTD6 (237 aa).

Residues 12–81 (HPVTLNVGGH…LRTSELTLPV (70 aa)) form the BTB domain.

As to quaternary structure, homopentamer. May be part of a cullin-containing E3 ubiquitin-protein ligase complex.

It participates in protein modification; protein ubiquitination. In terms of biological role, probable substrate-specific adapter of a cullin-containing E3 ubiquitin-protein ligase complex mediating the ubiquitination and subsequent proteasomal degradation of target proteins. The polypeptide is BTB/POZ domain-containing protein KCTD6 (kctd6) (Danio rerio (Zebrafish)).